Reading from the N-terminus, the 146-residue chain is UPF0260 protein VF_1660 (146 aa).

This sequence belongs to the UPF0260 family.

The polypeptide is UPF0260 protein VF_1660 (Aliivibrio fischeri (strain ATCC 700601 / ES114) (Vibrio fischeri)).